The primary structure comprises 592 residues: Leucine-rich repeat and immunoglobulin-like domain-containing nogo receptor-interacting protein 3 (592 aa).

Positions 1–24 (MTCWLCVLSLPLLLLPAAPPPAGG) are cleaved as a signal peptide. In terms of domain architecture, LRRNT spans 25–54 (CPARCECTVQTRAVACTRRRLTAVPDGIPA). The Extracellular portion of the chain corresponds to 25–531 (CPARCECTVQ…LDLTTILVST (507 aa)). LRR repeat units lie at residues 55-76 (ETRL…DLAA), 79-100 (ALEE…AFAN), 103-124 (RLRV…VFTR), 127-148 (NLTL…TFQD), 151-172 (SLRR…AFAG), 175-196 (ALEE…SLGH), 207-228 (HLAI…LHLE), 247-268 (NLTS…ALRH), 271-292 (HLTC…SFRD), 295-316 (RLRE…AFLG), and 319-340 (QIRL…TFHS). N-linked (GlcNAc...) asparagine glycosylation is present at Asn-127. Residue Asn-185 is glycosylated (N-linked (GlcNAc...) asparagine). 3 N-linked (GlcNAc...) asparagine glycosylation sites follow: Asn-247, Asn-257, and Asn-276. A glycan (N-linked (GlcNAc...) asparagine) is linked at Asn-324. Residues 352-406 (NPLACDCRLLWIVQRRKTLNFDGRLPACATPAEVRGDALRNLPDSVLFEYFVCRK) form the LRRCT domain. Residues 407 to 496 (PKIRERRLQR…GNDTYFATLT (90 aa)) enclose the Ig-like C2-type domain. Cys-429 and Cys-480 are oxidised to a cystine. Residues Asn-488 and Asn-512 are each glycosylated (N-linked (GlcNAc...) asparagine). Residues 532-552 (AMGCITFLGVVLFCFVLLFVW) form a helical membrane-spanning segment. Residues 553 to 592 (SRGRGQHKNNFSVEYSFRKVDGPAAAAGQGGARKFNMKMI) are Cytoplasmic-facing.

The protein resides in the membrane. This chain is Leucine-rich repeat and immunoglobulin-like domain-containing nogo receptor-interacting protein 3 (LINGO3), found in Homo sapiens (Human).